The sequence spans 354 residues: Protein RecA (354 aa).

67 to 74 (GPESSGKT) provides a ligand contact to ATP. Positions 331–354 (NQDSTPDFSVDDNGEGVKETNEDF) are disordered. Positions 345–354 (EGVKETNEDF) are enriched in basic and acidic residues.

It belongs to the RecA family.

Its subcellular location is the cytoplasm. Its function is as follows. Can catalyze the hydrolysis of ATP in the presence of single-stranded DNA, the ATP-dependent uptake of single-stranded DNA by duplex DNA, and the ATP-dependent hybridization of homologous single-stranded DNAs. It interacts with LexA causing its activation and leading to its autocatalytic cleavage. In Citrobacter koseri (strain ATCC BAA-895 / CDC 4225-83 / SGSC4696), this protein is Protein RecA.